A 255-amino-acid polypeptide reads, in one-letter code: Keratin-associated protein 10-2 (255 aa).

22 repeat units span residues 26–30, 36–40, 57–61, 79–83, 89–93, 99–103, 104–108, 109–113, 114–118, 120–124, 130–134, 145–149, 150–154, 162–166, 172–176, 182–186, 187–191, 192–196, 197–201, 209–213, 219–223, and 224–228. Residues 26–228 form a 22 X 5 AA repeats of C-C-X(3) region; that stretch reads CCELPCGTPS…CCTSSCCRPS (203 aa).

This sequence belongs to the KRTAP type 10 family. Interacts with hair keratins. Restricted to a narrow region of the hair fiber cuticle, lying approximately 20 cell layers above the apex of the dermal papilla of the hair root; not detected in any other tissues.

In terms of biological role, in the hair cortex, hair keratin intermediate filaments are embedded in an interfilamentous matrix, consisting of hair keratin-associated proteins (KRTAP), which are essential for the formation of a rigid and resistant hair shaft through their extensive disulfide bond cross-linking with abundant cysteine residues of hair keratins. The matrix proteins include the high-sulfur and high-glycine-tyrosine keratins. This is Keratin-associated protein 10-2 (KRTAP10-2) from Homo sapiens (Human).